The sequence spans 446 residues: Probable glycine dehydrogenase (decarboxylating) subunit 1 (446 aa).

It belongs to the GcvP family. N-terminal subunit subfamily. As to quaternary structure, the glycine cleavage system is composed of four proteins: P, T, L and H. In this organism, the P 'protein' is a heterodimer of two subunits.

The catalysed reaction is N(6)-[(R)-lipoyl]-L-lysyl-[glycine-cleavage complex H protein] + glycine + H(+) = N(6)-[(R)-S(8)-aminomethyldihydrolipoyl]-L-lysyl-[glycine-cleavage complex H protein] + CO2. Its function is as follows. The glycine cleavage system catalyzes the degradation of glycine. The P protein binds the alpha-amino group of glycine through its pyridoxal phosphate cofactor; CO(2) is released and the remaining methylamine moiety is then transferred to the lipoamide cofactor of the H protein. The chain is Probable glycine dehydrogenase (decarboxylating) subunit 1 from Coxiella burnetii (strain CbuK_Q154) (Coxiella burnetii (strain Q154)).